A 158-amino-acid chain; its full sequence is Cyclic pyranopterin monophosphate synthase (158 aa).

Residues 74-76 and 112-113 contribute to the substrate site; these read MCH and ME. D127 is a catalytic residue.

It belongs to the MoaC family. Homohexamer; trimer of dimers.

The catalysed reaction is (8S)-3',8-cyclo-7,8-dihydroguanosine 5'-triphosphate = cyclic pyranopterin phosphate + diphosphate. Its pathway is cofactor biosynthesis; molybdopterin biosynthesis. Functionally, catalyzes the conversion of (8S)-3',8-cyclo-7,8-dihydroguanosine 5'-triphosphate to cyclic pyranopterin monophosphate (cPMP). The polypeptide is Cyclic pyranopterin monophosphate synthase (Thermoanaerobacter sp. (strain X514)).